The sequence spans 156 residues: MSINATLLGQTLAFIIFVWCCMKFVWPPLMAAIEARQKAIADGLSSAERAKKDLDLAKANATDQLKEAKLQAAQIIEQANKRKAQIIDEAAVGAHTEREKILAQGRAEIDAERHRAKEELRKQVAALAIAGAEKILARHIDQAANSDIVDKLVAEL.

Residues alanine 13–isoleucine 33 traverse the membrane as a helical segment.

The protein belongs to the ATPase B chain family. In terms of assembly, F-type ATPases have 2 components, F(1) - the catalytic core - and F(0) - the membrane proton channel. F(1) has five subunits: alpha(3), beta(3), gamma(1), delta(1), epsilon(1). F(0) has three main subunits: a(1), b(2) and c(10-14). The alpha and beta chains form an alternating ring which encloses part of the gamma chain. F(1) is attached to F(0) by a central stalk formed by the gamma and epsilon chains, while a peripheral stalk is formed by the delta and b chains.

The protein localises to the cell inner membrane. In terms of biological role, f(1)F(0) ATP synthase produces ATP from ADP in the presence of a proton or sodium gradient. F-type ATPases consist of two structural domains, F(1) containing the extramembraneous catalytic core and F(0) containing the membrane proton channel, linked together by a central stalk and a peripheral stalk. During catalysis, ATP synthesis in the catalytic domain of F(1) is coupled via a rotary mechanism of the central stalk subunits to proton translocation. Its function is as follows. Component of the F(0) channel, it forms part of the peripheral stalk, linking F(1) to F(0). In Aeromonas salmonicida (strain A449), this protein is ATP synthase subunit b.